We begin with the raw amino-acid sequence, 1404 residues long: DNA-directed RNA polymerase subunit beta' (1404 aa).

Residues Cys70, Cys72, Cys85, and Cys88 each contribute to the Zn(2+) site. 3 residues coordinate Mg(2+): Asp458, Asp460, and Asp462. The Zn(2+) site is built by Cys813, Cys887, Cys894, and Cys897. Residues 1377–1404 (ERRAIAESEAAELEASQAETSDENAAAE) form a disordered region.

Belongs to the RNA polymerase beta' chain family. As to quaternary structure, the RNAP catalytic core consists of 2 alpha, 1 beta, 1 beta' and 1 omega subunit. When a sigma factor is associated with the core the holoenzyme is formed, which can initiate transcription. Mg(2+) is required as a cofactor. Requires Zn(2+) as cofactor.

The enzyme catalyses RNA(n) + a ribonucleoside 5'-triphosphate = RNA(n+1) + diphosphate. Its function is as follows. DNA-dependent RNA polymerase catalyzes the transcription of DNA into RNA using the four ribonucleoside triphosphates as substrates. The chain is DNA-directed RNA polymerase subunit beta' from Polaromonas naphthalenivorans (strain CJ2).